Consider the following 122-residue polypeptide: uncharacterized protein (122 aa).

This is an uncharacterized protein from Aquifex aeolicus (strain VF5).